We begin with the raw amino-acid sequence, 384 residues long: G protein-coupled receptor 88 (384 aa).

The Extracellular portion of the chain corresponds to 1-35 (MTNSSSTSTSSTTGGSLLLLCEEEESWAGRRIPVS). Asparagine 3 carries an N-linked (GlcNAc...) asparagine glycan. A helical transmembrane segment spans residues 36 to 56 (LLYSGLAIGGTLANGMVIYLV). The Cytoplasmic segment spans residues 57-73 (SSFRKLQTTSNAFIVNG). A helical transmembrane segment spans residues 74 to 94 (CAADLSVCALWMPQEAVLGLL). Residues 95–116 (PTGSAEPPADWDGAGGSYRLLR) lie on the Extracellular side of the membrane. A helical transmembrane segment spans residues 117 to 136 (GGLLGLGLTVSLLSHCLVAL). The Cytoplasmic segment spans residues 137 to 158 (NRYLLITRAPATYQALYQRRHT). A helical membrane pass occupies residues 159-179 (AGMLALSWALALGLVLLLPPW). At 180-195 (APRPGAAPPRVHYPAL) the chain is on the extracellular side. A helical transmembrane segment spans residues 196-216 (LAAAALLAQTALLLHCYLGIV). Over 217–285 (RRVRVSVKRV…RAQRRLSGLS (69 aa)) the chain is Cytoplasmic. A helical transmembrane segment spans residues 286–306 (VLLLCCVFLLATQPLVWVSLA). Topologically, residues 307–310 (SGFS) are extracellular. Residues 311-331 (LPVPWGVQAASWLLCCALSAL) form a helical membrane-spanning segment. The Cytoplasmic segment spans residues 332–384 (NPLLYTWRNEEFRRSVRSVLPGVGDAAAAAVAATAVPAVSQAQLGTRAAGQHW).

It belongs to the G-protein coupled receptor 1 family. In terms of tissue distribution, expressed predominantly in the striatum.

It localises to the cell membrane. The protein localises to the cell projection. It is found in the cilium membrane. Its subcellular location is the cytoplasm. The protein resides in the nucleus. Functionally, orphan G protein-coupled receptor implicated in a large repertoire of behavioral responses that engage motor activities, spatial learning, and emotional processing. May play a role in the regulation of cognitive and motor function. Couples with the heterotrimeric G protein complex of the G(i) subfamily, consisting of GNAI1, GNB1 and GNG2, thereby acting through a G(i)-mediated pathway. Plays a role in the attenuation of D1 dopamine receptor (D1R)-mediated cAMP response in ciliated cells. In non-ciliated cells, involved in the inhibition of the beta-2 adrenergic receptor (B2AR) response. The protein is G protein-coupled receptor 88 (GPR88) of Homo sapiens (Human).